Reading from the N-terminus, the 337-residue chain is Neurogenic differentiation factor 6 (337 aa).

Positions 43-82 (LRGKSIKRAPGEETEKEEEEEDREEEDENGLPRRRGLRKK) are disordered. Residues 54–71 (EETEKEEEEEDREEEDEN) show a composition bias toward acidic residues. The short motif at 80 to 86 (RKKKTTK) is the Nuclear localization signal element. A bHLH domain is found at 94–146 (FRRQEANARERNRMHGLNDALDNLRKVVPCYSKTQKLSKIETLRLAKNYIWAL).

As to quaternary structure, efficient DNA binding requires dimerization with another bHLH protein.

It is found in the nucleus. In terms of biological role, activates E box-dependent transcription in collaboration with TCF3/E47. May be a trans-acting factor involved in the development and maintenance of the mammalian nervous system. Transactivates the promoter of its own gene. The protein is Neurogenic differentiation factor 6 (NEUROD6) of Bos taurus (Bovine).